Consider the following 756-residue polypeptide: Transient receptor potential cation channel subfamily V member 2 (756 aa).

A disordered region spans residues 1–45 (MTSASNPPAFRLETSDGDEEGSAEVNKGKNEPPPMESPFQGEDRN). The required for interaction with SLC50A1 stretch occupies residues 1–385 (MTSASNPPAF…LLQEKWDRLI (385 aa)). Topologically, residues 1–387 (MTSASNPPAF…QEKWDRLIPR (387 aa)) are cytoplasmic. Phosphoserine is present on residues Ser-15 and Ser-77. ANK repeat units lie at residues 68–110 (NRFD…TEGS), 111–157 (TGKT…DEFY), 158–203 (RGHS…TCFY), 204–239 (FGEL…ATDS), 240–288 (LGNT…ICNH), and 289–315 (QGLT…REFS). The chain crosses the membrane as a helical span at residues 388 to 408 (FFFNFACYLVYMIIFTIVAYH). The Extracellular segment spans residues 409-428 (QPSLEQPAIPSSKATFGDSM). A helical transmembrane segment spans residues 429–449 (LLLGHILILLGGIYLLLGQLW). Over 450 to 455 (YFWRRR) the chain is Cytoplasmic. The helical transmembrane segment at 456-476 (LFIWISFMDSYFEILFLVQAL) threads the bilayer. Topologically, residues 477–490 (LTVLSQVLRFVETE) are extracellular. A helical transmembrane segment spans residues 491–511 (WYLPLLVSSLVLGWLNLLYYT). At 512-532 (RGFQHTGIYSVMIQKVILRDL) the chain is on the cytoplasmic side. Residues 533–553 (LRFLLVYLVFLFGFAVALVSL) form a helical membrane-spanning segment. A disordered region spans residues 559–583 (SPKAPEDSNTTVTEKPTLGQEEEPV). The N-linked (GlcNAc...) asparagine glycan is linked to Asn-567. The segment at residues 568–604 (TTVTEKPTLGQEEEPVPYGGILDASLELFKFTIGMGE) is an intramembrane region (pore-forming). Residues 617-637 (VLLLLLAYVLLTYVLLLNMLI) traverse the membrane as a helical segment. Residues 638-756 (ALMSETVNSV…HLPLQVLQSH (119 aa)) lie on the Cytoplasmic side of the membrane. A disordered region spans residues 719–756 (EDPSGAGITGYKKNPTSKPGKNSASEEDHLPLQVLQSH). A compositionally biased stretch (polar residues) spans 732-741 (NPTSKPGKNS). Ser-743 and Ser-755 each carry phosphoserine.

The protein belongs to the transient receptor (TC 1.A.4) family. TrpV subfamily. TRPV2 sub-subfamily. In terms of assembly, homotetramer. Interacts with a cAMP-dependent protein kinase type II regulatory subunit (PRKAR2A or PRKAR2B) and ACBD3. Interacts with SLC50A1; the interaction probably occurs intracellularly and depends on TRPV2 N-glycosylation. N-glycosylated. Post-translationally, phosphorylated by PKA. Abundantly expressed in spleen, placenta, skeleton muscle, lung and brain.

The protein localises to the cell membrane. It is found in the cytoplasm. The protein resides in the melanosome. The enzyme catalyses Ca(2+)(in) = Ca(2+)(out). It catalyses the reaction Mg(2+)(in) = Mg(2+)(out). The catalysed reaction is Na(+)(in) = Na(+)(out). It carries out the reaction K(+)(in) = K(+)(out). Functionally, calcium-permeable, non-selective cation channel with an outward rectification. Seems to be regulated, at least in part, by IGF1, PDGF and neuropeptide head activator. May transduce physical stimuli in mast cells. Activated by temperatures higher than 52 degrees Celsius; is not activated by vanilloids and acidic pH. In Mus musculus (Mouse), this protein is Transient receptor potential cation channel subfamily V member 2 (Trpv2).